We begin with the raw amino-acid sequence, 410 residues long: Arginine deiminase (410 aa).

The active-site Amidino-cysteine intermediate is the Cys-400.

It belongs to the arginine deiminase family.

The protein localises to the cytoplasm. It catalyses the reaction L-arginine + H2O = L-citrulline + NH4(+). It functions in the pathway amino-acid degradation; L-arginine degradation via ADI pathway; carbamoyl phosphate from L-arginine: step 1/2. This is Arginine deiminase (arcA) from Lactococcus lactis subsp. lactis (strain IL1403) (Streptococcus lactis).